We begin with the raw amino-acid sequence, 195 residues long: MRLLEERIKKDGQVLGEDVLKVDNFLNHQVDPELMAAMGEEFKRLFEGAPITKILTVESSGIAPAVFSGLAFHVPVVFARKHKSLTLQDNMYSATVYSYTKKVNNHISISKKFLNENDRVLVIDDFLANGQAVEGLLEIIDQAGAQLEGVGIVIEKTFQKGRELLDQRGIHVESLARIAAFEQGEVVFLDENNEN.

Residues Leu-20 and Asn-27 each contribute to the xanthine site. Ala-128 to Ala-132 provides a ligand contact to 5-phospho-alpha-D-ribose 1-diphosphate. Residue Lys-156 participates in xanthine binding.

It belongs to the purine/pyrimidine phosphoribosyltransferase family. Xpt subfamily. As to quaternary structure, homodimer.

It localises to the cytoplasm. It catalyses the reaction XMP + diphosphate = xanthine + 5-phospho-alpha-D-ribose 1-diphosphate. It participates in purine metabolism; XMP biosynthesis via salvage pathway; XMP from xanthine: step 1/1. Converts the preformed base xanthine, a product of nucleic acid breakdown, to xanthosine 5'-monophosphate (XMP), so it can be reused for RNA or DNA synthesis. The chain is Xanthine phosphoribosyltransferase from Latilactobacillus sakei subsp. sakei (strain 23K) (Lactobacillus sakei subsp. sakei).